Here is a 533-residue protein sequence, read N- to C-terminus: Thromboxane-A synthase (533 aa).

Topologically, residues 1–10 are cytoplasmic; that stretch reads MEVLGLLKFE. A helical transmembrane segment spans residues 11–31; it reads VSGTVVTVTLSVVLLALLKWY. Residues 32–75 are Lumenal-facing; that stretch reads STSAFSRLRKLGIRHPEPSPFVGNLMFFRQGFWESHLELRERYG. The chain crosses the membrane as a helical span at residues 76–96; it reads PLCGYYLGRRMYIVISDPDMI. Topologically, residues 97–223 are cytoplasmic; that stretch reads KEVLVENFSN…QRVFAFSTPR (127 aa). Residues 224–244 traverse the membrane as a helical segment; it reads PLLALILSFPSIMVPLARILP. Residues 245–335 lie on the Lumenal side of the membrane; the sequence is NKNRDELNGF…LTVDEIAGQA (91 aa). Residues 336-356 form a helical membrane-spanning segment; sequence FLFLIAGHEITTNTLSFITYL. At 357–533 the chain is on the cytoplasmic side; it reads LATHPECQER…NGVYVKIVSR (177 aa). Residue Cys479 participates in heme binding.

This sequence belongs to the cytochrome P450 family. In terms of assembly, monomer. The cofactor is heme. As to expression, expressed in bone marrow, spleen, lung, thymus, liver, uterus, and macrophages.

It is found in the endoplasmic reticulum membrane. The catalysed reaction is prostaglandin H2 = thromboxane A2. It carries out the reaction prostaglandin H2 = (12S)-hydroxy-(5Z,8E,10E)-heptadecatrienoate + malonaldehyde. The enzyme catalyses a hydroperoxyeicosatetraenoate = an oxoeicosatetraenoate + H2O. It catalyses the reaction (15S)-hydroperoxy-(5Z,8Z,11Z,13E)-eicosatetraenoate = 15-oxo-(5Z,8Z,11Z,13E)-eicosatetraenoate + H2O. The catalysed reaction is (15S)-hydroperoxy-(5Z,8Z,11Z,13E)-eicosatetraenoate + AH2 = (15S)-hydroxy-(5Z,8Z,11Z,13E)-eicosatetraenoate + A + H2O. Catalyzes the conversion of prostaglandin H2 (PGH2) to thromboxane A2 (TXA2), a potent inducer of blood vessel constriction and platelet aggregation. Also cleaves PGH2 to 12-hydroxy-heptadecatrienoicacid (12-HHT) and malondialdehyde, which is known to act as a mediator of DNA damage. 12-HHT and malondialdehyde are formed stoichiometrically in the same amounts as TXA2. Additionally, displays dehydratase activity, toward (15S)-hydroperoxy-(5Z,8Z,11Z,13E)-eicosatetraenoate (15(S)-HPETE) producing 15-KETE and 15-HETE. This chain is Thromboxane-A synthase (Tbxas1), found in Rattus norvegicus (Rat).